A 262-amino-acid chain; its full sequence is Cytochrome c oxidase subunit 3 (262 aa).

The next 6 helical transmembrane spans lie at Y39–W59, G83–F103, M120–A140, G163–I183, A201–L221, and A240–W260.

Belongs to the cytochrome c oxidase subunit 3 family. As to quaternary structure, component of the cytochrome c oxidase (complex IV, CIV), a multisubunit enzyme composed of a catalytic core of 3 subunits and several supernumerary subunits. The complex exists as a monomer or a dimer and forms supercomplexes (SCs) in the inner mitochondrial membrane with ubiquinol-cytochrome c oxidoreductase (cytochrome b-c1 complex, complex III, CIII).

Its subcellular location is the mitochondrion inner membrane. It carries out the reaction 4 Fe(II)-[cytochrome c] + O2 + 8 H(+)(in) = 4 Fe(III)-[cytochrome c] + 2 H2O + 4 H(+)(out). Its function is as follows. Component of the cytochrome c oxidase, the last enzyme in the mitochondrial electron transport chain which drives oxidative phosphorylation. The respiratory chain contains 3 multisubunit complexes succinate dehydrogenase (complex II, CII), ubiquinol-cytochrome c oxidoreductase (cytochrome b-c1 complex, complex III, CIII) and cytochrome c oxidase (complex IV, CIV), that cooperate to transfer electrons derived from NADH and succinate to molecular oxygen, creating an electrochemical gradient over the inner membrane that drives transmembrane transport and the ATP synthase. Cytochrome c oxidase is the component of the respiratory chain that catalyzes the reduction of oxygen to water. Electrons originating from reduced cytochrome c in the intermembrane space (IMS) are transferred via the dinuclear copper A center (CU(A)) of subunit 2 and heme A of subunit 1 to the active site in subunit 1, a binuclear center (BNC) formed by heme A3 and copper B (CU(B)). The BNC reduces molecular oxygen to 2 water molecules using 4 electrons from cytochrome c in the IMS and 4 protons from the mitochondrial matrix. This chain is Cytochrome c oxidase subunit 3 (mt:CoIII), found in Drosophila yakuba (Fruit fly).